The following is an 86-amino-acid chain: Small ribosomal subunit protein bS20 (86 aa).

This sequence belongs to the bacterial ribosomal protein bS20 family.

Its function is as follows. Binds directly to 16S ribosomal RNA. The protein is Small ribosomal subunit protein bS20 of Kocuria rhizophila (strain ATCC 9341 / DSM 348 / NBRC 103217 / DC2201).